Reading from the N-terminus, the 338-residue chain is Nickel transporter NixA (338 aa).

Helical transmembrane passes span 11–31 (WLPY…FLWI), 37–57 (HILF…AFDA), 79–99 (GVGF…AVFL), 127–147 (FFLV…INLF), 187–207 (VLPL…IALL), 217–237 (AISF…MSLL), 266–286 (ITAI…LQIL), and 307–327 (YLGY…SLIW).

This sequence belongs to the NiCoT transporter (TC 2.A.52) family.

Its subcellular location is the cell membrane. Functionally, secondary nickel transporter. Required for full urease activity. This is Nickel transporter NixA from Staphylococcus aureus (strain NCTC 8325 / PS 47).